A 321-amino-acid polypeptide reads, in one-letter code: Epiphycan (321 aa).

An N-terminal signal peptide occupies residues 1 to 19 (MKALARLIVGLLILDAAVT). A glycan (O-linked (GalNAc...) threonine) is linked at T60. S64 carries an O-linked (Xyl...) (dermatan sulfate) serine glycan. Positions 64-100 (SGNRELLTPPPQPEEAEEEEEEESTPRLIDGSSPQEP) are disordered. Over residues 77 to 86 (EEAEEEEEEE) the composition is skewed to acidic residues. S95 carries O-linked (GalNAc...) serine glycosylation. The region spanning 105-142 (VLGPQTNEDFPTCLLCTCISTTVYCDDHELDAIPPLPK) is the LRRNT domain. C117 and C129 form a disulfide bridge. LRR repeat units lie at residues 143–164 (NTAYFYSRFNRIKKINKNDFAS), 167–188 (DLRRIDLTSNLISEIDEDAFRK), 191–212 (QLRELVLRDNKIRQLPELPTTL), 237–257 (DLHHLYLTDNNLDHIPLPLPE), and 258–279 (NLRALHLQNNNIMEMHEDTFCN). The cysteines at positions 278 and 311 are disulfide-linked. N282 carries N-linked (GlcNAc...) asparagine glycosylation. An LRR 6 repeat occupies 289-309 (ALEDIRLDGNPINLSKTPQAY).

Belongs to the small leucine-rich proteoglycan (SLRP) family. SLRP class III subfamily. In terms of processing, a long and a short form present in approximately equimolar amounts may arise by proteolysis or cleavage by exopeptidases. Post-translationally, the O-linked polysaccharides on Thr-60 and Ser-95 are probably the mucin type linked to GalNAc. There is one glycosaminoglycan chain, known to be dermatan sulfate, and it is probably the O-glycosylation at Ser-64. As to expression, preferentially expressed in the zone of flattened chondrocytes of the developing limb cartilage.

It is found in the secreted. It localises to the extracellular space. The protein localises to the extracellular matrix. In terms of biological role, may have a role in bone formation and also in establishing the ordered structure of cartilage through matrix organization. The sequence is that of Epiphycan (EPYC) from Bos taurus (Bovine).